The following is a 313-amino-acid chain: Beta-lactamase (313 aa).

The signal sequence occupies residues 1–15; sequence MQRIGVTDYTILGTV. Ser-190 (acyl-ester intermediate) is an active-site residue.

It belongs to the class-C beta-lactamase family.

It carries out the reaction a beta-lactam + H2O = a substituted beta-amino acid. Upon expression in E.coli enables the latter to utilize penicillin as a carbon source. This chain is Beta-lactamase (penA), found in Burkholderia multivorans (strain ATCC 17616 / 249).